A 200-amino-acid chain; its full sequence is Cell division protein SepF (200 aa).

Disordered regions lie at residues 35–60 and 170–200; these read NLYQ…RWRE and LHEV…RMAQ. Residues 183–200 are compositionally biased toward polar residues; it reads PTGSPNQTWGNETNRMAQ.

This sequence belongs to the SepF family. Homodimer. Interacts with FtsZ.

It is found in the cytoplasm. Functionally, cell division protein that is part of the divisome complex and is recruited early to the Z-ring. Probably stimulates Z-ring formation, perhaps through the cross-linking of FtsZ protofilaments. Its function overlaps with FtsA. The polypeptide is Cell division protein SepF (Nostoc punctiforme (strain ATCC 29133 / PCC 73102)).